Reading from the N-terminus, the 345-residue chain is S-adenosylmethionine:tRNA ribosyltransferase-isomerase (345 aa).

It belongs to the QueA family. In terms of assembly, monomer.

It localises to the cytoplasm. The catalysed reaction is 7-aminomethyl-7-carbaguanosine(34) in tRNA + S-adenosyl-L-methionine = epoxyqueuosine(34) in tRNA + adenine + L-methionine + 2 H(+). Its pathway is tRNA modification; tRNA-queuosine biosynthesis. Its function is as follows. Transfers and isomerizes the ribose moiety from AdoMet to the 7-aminomethyl group of 7-deazaguanine (preQ1-tRNA) to give epoxyqueuosine (oQ-tRNA). This is S-adenosylmethionine:tRNA ribosyltransferase-isomerase from Shewanella sp. (strain MR-7).